Reading from the N-terminus, the 652-residue chain is Phosphomethylpyrimidine synthase (652 aa).

Residues Asn235, Met264, Tyr293, His329, 349–351 (SRG), 390–393 (DGMR), and Glu429 contribute to the substrate site. His433 is a Zn(2+) binding site. Position 456 (Tyr456) interacts with substrate. A Zn(2+)-binding site is contributed by His497. 3 residues coordinate [4Fe-4S] cluster: Cys577, Cys580, and Cys585.

This sequence belongs to the ThiC family. In terms of assembly, homodimer. [4Fe-4S] cluster is required as a cofactor.

It carries out the reaction 5-amino-1-(5-phospho-beta-D-ribosyl)imidazole + S-adenosyl-L-methionine = 4-amino-2-methyl-5-(phosphooxymethyl)pyrimidine + CO + 5'-deoxyadenosine + formate + L-methionine + 3 H(+). It participates in cofactor biosynthesis; thiamine diphosphate biosynthesis. In terms of biological role, catalyzes the synthesis of the hydroxymethylpyrimidine phosphate (HMP-P) moiety of thiamine from aminoimidazole ribotide (AIR) in a radical S-adenosyl-L-methionine (SAM)-dependent reaction. The sequence is that of Phosphomethylpyrimidine synthase from Shewanella sediminis (strain HAW-EB3).